A 516-amino-acid polypeptide reads, in one-letter code: MRTRHLVGLISGVLILSVLLPVGLSIWLAHQQVETSFIEELDTYSSRVAIRANKVATQGKDALQELERWQGAACSEAHLMEMRRVSYSYRYIQEVAYIDNNVPQCSSLEHESPPDTFPEPGKISKDGYRVWLTSHNDLGIIRYMVAMGTAHYVVMIDPASFIDVIPYSSWQIDAAIIGNAHNVVITSSDEIAQGIITRLQKTPGEHIENNGIIYDILPLPEMNISIITWASTKMLQKGWHRQVFIWLPLGLVIGLLAAMFVLRILRRIQSPHHRLQDAIENRDICVHYQPIVSLANGKIVGAEALARWPQTDGSWLSPDSFIPLAQQTGLSEPLTLLIIRSVFEDMGDWLRQHPQQHISINLESPVLTSEKIPQLLRDMINHYQVNPRQIALELTEREFADPKTSAPIISRYREAGHEIYLDDFGTGYSSLSYLQDLDVDILKIDKSFVDALEYKNVTPHIIEMAKTLKLKMVAEGIETSKQEEWLRQHGVHYGQGWLYSKALPKEDFLRWAEQHL.

A run of 2 helical transmembrane segments spans residues 6 to 26 and 242 to 262; these read LVGLISGVLILSVLLPVGLSI and QVFIWLPLGLVIGLLAAMFVL. The 249-residue stretch at 268-516 folds into the EAL domain; that stretch reads IQSPHHRLQD…DFLRWAEQHL (249 aa).

Its subcellular location is the cell inner membrane. It carries out the reaction 3',3'-c-di-GMP + H2O = 5'-phosphoguanylyl(3'-&gt;5')guanosine + H(+). Its function is as follows. Phosphodiesterase (PDE) that catalyzes the hydrolysis of cyclic-di-GMP (c-di-GMP) to 5'-pGpG. The polypeptide is Probable cyclic di-GMP phosphodiesterase PdeB (Escherichia coli (strain K12)).